Here is a 110-residue protein sequence, read N- to C-terminus: Large ribosomal subunit protein eL34 (110 aa).

The segment at 1 to 41 (MKNVLIHKGATYKTRSNRRRKVRTPSGKLVNRRVKKHSKKH) is disordered. A compositionally biased stretch (basic residues) spans 30-41 (VNRRVKKHSKKH).

It belongs to the eukaryotic ribosomal protein eL34 family.

The protein is Large ribosomal subunit protein eL34 (RPL34) of Encephalitozoon cuniculi (strain GB-M1) (Microsporidian parasite).